We begin with the raw amino-acid sequence, 226 residues long: Orotidine 5'-phosphate decarboxylase (226 aa).

Residues aspartate 9, lysine 31, 58 to 67, threonine 115, arginine 176, glutamine 184, glycine 204, and arginine 205 contribute to the substrate site; that span reads DLKLYDIPNT. The active-site Proton donor is lysine 60.

Belongs to the OMP decarboxylase family. Type 1 subfamily. In terms of assembly, homodimer.

It carries out the reaction orotidine 5'-phosphate + H(+) = UMP + CO2. Its pathway is pyrimidine metabolism; UMP biosynthesis via de novo pathway; UMP from orotate: step 2/2. Its function is as follows. Catalyzes the decarboxylation of orotidine 5'-monophosphate (OMP) to uridine 5'-monophosphate (UMP). The chain is Orotidine 5'-phosphate decarboxylase from Wolbachia pipientis subsp. Culex pipiens (strain wPip).